Consider the following 315-residue polypeptide: Zinc metalloproteinase nas-4 (315 aa).

A signal peptide spans 1–20 (MMTIQRYSLVFCAIFATCWT). Asn71 carries N-linked (GlcNAc...) asparagine glycosylation. One can recognise a Peptidase M12A domain in the interval 95–290 (NAIKQIYRRW…RKINKLYNCP (196 aa)). 2 cysteine pairs are disulfide-bonded: Cys137–Cys289 and Cys160–Cys179. His187 serves as a coordination point for Zn(2+). The active site involves Glu188. Zn(2+) contacts are provided by His191 and His197. A disordered region spans residues 291 to 315 (GVSGNNNNNNNNQINSNSIVNHPQV).

Requires Zn(2+) as cofactor. As to expression, digestive tract. Found in the pharynx cells of the procorpus, metacorpus, isthmus and terminal bulb, and in the terminal bulb lumen.

It localises to the secreted. In terms of biological role, metalloprotease. May be involved in digestion. The polypeptide is Zinc metalloproteinase nas-4 (nas-4) (Caenorhabditis elegans).